Reading from the N-terminus, the 148-residue chain is Ribonuclease H (148 aa).

The region spanning 3-144 is the RNase H type-1 domain; that stretch reads AEETVEIFTD…ADALANRGIE (142 aa). Positions 12, 50, 72, and 136 each coordinate Mg(2+). Residues 129 to 148 are disordered; that stretch reads HPENERADALANRGIEELKG.

It belongs to the RNase H family. As to quaternary structure, monomer. Mg(2+) serves as cofactor.

The protein localises to the cytoplasm. The enzyme catalyses Endonucleolytic cleavage to 5'-phosphomonoester.. In terms of biological role, endonuclease that specifically degrades the RNA of RNA-DNA hybrids. The sequence is that of Ribonuclease H from Dechloromonas aromatica (strain RCB).